The primary structure comprises 146 residues: SsrA-binding protein (146 aa).

Residues 127–139 (KRQTIKDRDNSRE) show a composition bias toward basic and acidic residues. The segment at 127–146 (KRQTIKDRDNSREARKHIRV) is disordered.

Belongs to the SmpB family.

The protein localises to the cytoplasm. Functionally, required for rescue of stalled ribosomes mediated by trans-translation. Binds to transfer-messenger RNA (tmRNA), required for stable association of tmRNA with ribosomes. tmRNA and SmpB together mimic tRNA shape, replacing the anticodon stem-loop with SmpB. tmRNA is encoded by the ssrA gene; the 2 termini fold to resemble tRNA(Ala) and it encodes a 'tag peptide', a short internal open reading frame. During trans-translation Ala-aminoacylated tmRNA acts like a tRNA, entering the A-site of stalled ribosomes, displacing the stalled mRNA. The ribosome then switches to translate the ORF on the tmRNA; the nascent peptide is terminated with the 'tag peptide' encoded by the tmRNA and targeted for degradation. The ribosome is freed to recommence translation, which seems to be the essential function of trans-translation. This Malacoplasma penetrans (strain HF-2) (Mycoplasma penetrans) protein is SsrA-binding protein.